The chain runs to 595 residues: Putative histone-lysine N-methyltransferase PRDM6 (595 aa).

The interval 27–90 is disordered; the sequence is FPHGGAGPLK…STPASSSTSA (64 aa). Residues 30–40 are compositionally biased toward gly residues; that stretch reads GGAGPLKGSGA. A compositionally biased stretch (pro residues) spans 49–59; it reads PLQPPPPPPPP. Positions 71-90 are enriched in low complexity; it reads PRPASLSSASSTPASSSTSA. The region spanning 246–365 is the SET domain; the sequence is REVCLCTSTV…RGTELLVWYN (120 aa). The segment at 473 to 495 adopts a C2H2-type 1; degenerate zinc-finger fold; it reads WKCGQCFKTFTQRILLQMHVCTQ. 2 consecutive C2H2-type zinc fingers follow at residues 501 to 523 and 529 to 551; these read YQCG…VVTH and FKCG…IRTH. The segment at 557–579 adopts a C2H2-type 4; degenerate zinc-finger fold; that stretch reads FKCERCERSFTQATQLSRHQRMP.

Belongs to the class V-like SAM-binding methyltransferase superfamily. In terms of assembly, interacts with HDAC1, HDAC2, HDAC3, CBX1 and EP300.

It localises to the nucleus. The catalysed reaction is L-lysyl(20)-[histone H4] + S-adenosyl-L-methionine = N(6)-methyl-L-lysyl(20)-[histone H4] + S-adenosyl-L-homocysteine + H(+). Its function is as follows. Putative histone methyltransferase that acts as a transcriptional repressor of smooth muscle gene expression. Promotes the transition from differentiated to proliferative smooth muscle by suppressing differentiation and maintaining the proliferative potential of vascular smooth muscle cells. Also plays a role in endothelial cells by inhibiting endothelial cell proliferation, survival and differentiation. It is unclear whether it has histone methyltransferase activity in vivo. According to some authors, it does not act as a histone methyltransferase by itself and represses transcription by recruiting EHMT2/G9a. According to others, it possesses histone methyltransferase activity when associated with other proteins and specifically methylates 'Lys-20' of histone H4 in vitro. 'Lys-20' methylation represents a specific tag for epigenetic transcriptional repression. This chain is Putative histone-lysine N-methyltransferase PRDM6 (PRDM6), found in Homo sapiens (Human).